We begin with the raw amino-acid sequence, 105 residues long: Phosphoribosyl-AMP cyclohydrolase (105 aa).

Aspartate 72 contacts Mg(2+). Cysteine 73 contributes to the Zn(2+) binding site. Mg(2+) is bound by residues aspartate 74 and aspartate 76. Residues cysteine 89 and cysteine 96 each coordinate Zn(2+).

This sequence belongs to the PRA-CH family. Homodimer. The cofactor is Mg(2+). It depends on Zn(2+) as a cofactor.

The protein resides in the cytoplasm. The catalysed reaction is 1-(5-phospho-beta-D-ribosyl)-5'-AMP + H2O = 1-(5-phospho-beta-D-ribosyl)-5-[(5-phospho-beta-D-ribosylamino)methylideneamino]imidazole-4-carboxamide. It participates in amino-acid biosynthesis; L-histidine biosynthesis; L-histidine from 5-phospho-alpha-D-ribose 1-diphosphate: step 3/9. In terms of biological role, catalyzes the hydrolysis of the adenine ring of phosphoribosyl-AMP. This is Phosphoribosyl-AMP cyclohydrolase from Listeria monocytogenes serotype 4b (strain CLIP80459).